The sequence spans 310 residues: MKLVFAGTPEVAVPALDALIASGRHEVAAVVTRPDAPAGRGRRLVASPVAQRAEEAGIEVLKPVKPRDEEFLARLREIAPDCCPVVAYGALLPRVALDIPAHGWVNLHFSLLPAWRGAAPVQHSIMAGDEITGASTFLIEEGLDSGPVFGTVTEEIRPTDTSGDLLTRLAFAGSGLLVATMDGVEEGKLKAVPQPADGITLAPKITVENAHVDWSTPALRVDRVVRGCTPAPGAWTVFRGERLKLIQVVPVPERTDLAPGALSVGKNNVYVGTGSYAVELLWVQAQGKKPMRAADWARGVRITDGEPLGA.

A (6S)-5,6,7,8-tetrahydrofolate-binding site is contributed by 110 to 113 (SLLP).

The protein belongs to the Fmt family.

The enzyme catalyses L-methionyl-tRNA(fMet) + (6R)-10-formyltetrahydrofolate = N-formyl-L-methionyl-tRNA(fMet) + (6S)-5,6,7,8-tetrahydrofolate + H(+). In terms of biological role, attaches a formyl group to the free amino group of methionyl-tRNA(fMet). The formyl group appears to play a dual role in the initiator identity of N-formylmethionyl-tRNA by promoting its recognition by IF2 and preventing the misappropriation of this tRNA by the elongation apparatus. In Streptomyces avermitilis (strain ATCC 31267 / DSM 46492 / JCM 5070 / NBRC 14893 / NCIMB 12804 / NRRL 8165 / MA-4680), this protein is Methionyl-tRNA formyltransferase.